The sequence spans 381 residues: Protein pelota homolog (381 aa).

The protein belongs to the eukaryotic release factor 1 family. Pelota subfamily. In terms of assembly, component of the Pelota-HBS1L complex, also named Dom34-Hbs1 complex, composed of pelo-1 and hbs-1. A divalent metal cation serves as cofactor.

It localises to the cytoplasm. It is found in the nucleus. Its function is as follows. Component of the Pelota-HBS1L complex, a complex that recognizes stalled ribosomes and triggers the No-Go Decay (NGD) pathway. In the Pelota-HBS1L complex, pelo-1 recognizes ribosomes stalled at the 3' end of an mRNA and engages stalled ribosomes by destabilizing mRNA in the mRNA channel. Following ribosome-binding, the Pelota-HBS1L complex promotes the disassembly of stalled ribosomes, followed by degradation of damaged mRNAs as part of the NGD pathway. The chain is Protein pelota homolog from Caenorhabditis elegans.